Reading from the N-terminus, the 867-residue chain is DNA mismatch repair protein MutS (867 aa).

606 to 613 (GPNMSGKS) is an ATP binding site.

This sequence belongs to the DNA mismatch repair MutS family.

Functionally, this protein is involved in the repair of mismatches in DNA. It is possible that it carries out the mismatch recognition step. This protein has a weak ATPase activity. The chain is DNA mismatch repair protein MutS from Oceanobacillus iheyensis (strain DSM 14371 / CIP 107618 / JCM 11309 / KCTC 3954 / HTE831).